A 749-amino-acid chain; its full sequence is Ribosomal RNA large subunit methyltransferase K/L (749 aa).

The 112-residue stretch at Gln43–Leu154 folds into the THUMP domain. Positions Val386–Thr406 are disordered.

Belongs to the methyltransferase superfamily. RlmKL family.

It localises to the cytoplasm. The catalysed reaction is guanosine(2445) in 23S rRNA + S-adenosyl-L-methionine = N(2)-methylguanosine(2445) in 23S rRNA + S-adenosyl-L-homocysteine + H(+). It catalyses the reaction guanosine(2069) in 23S rRNA + S-adenosyl-L-methionine = N(2)-methylguanosine(2069) in 23S rRNA + S-adenosyl-L-homocysteine + H(+). In terms of biological role, specifically methylates the guanine in position 2445 (m2G2445) and the guanine in position 2069 (m7G2069) of 23S rRNA. The polypeptide is Ribosomal RNA large subunit methyltransferase K/L (Psychromonas ingrahamii (strain DSM 17664 / CCUG 51855 / 37)).